The following is a 287-amino-acid chain: ATP synthase gamma chain (287 aa).

It belongs to the ATPase gamma chain family. F-type ATPases have 2 components, CF(1) - the catalytic core - and CF(0) - the membrane proton channel. CF(1) has five subunits: alpha(3), beta(3), gamma(1), delta(1), epsilon(1). CF(0) has three main subunits: a, b and c.

It is found in the cell membrane. Its function is as follows. Produces ATP from ADP in the presence of a proton gradient across the membrane. The gamma chain is believed to be important in regulating ATPase activity and the flow of protons through the CF(0) complex. In Wolbachia sp. subsp. Drosophila simulans (strain wRi), this protein is ATP synthase gamma chain.